A 160-amino-acid polypeptide reads, in one-letter code: Phosphopantetheine adenylyltransferase (160 aa).

T10 lines the substrate pocket. ATP-binding positions include 10 to 11 (TF) and H18. The substrate site is built by K42, M74, and R88. ATP contacts are provided by residues 89–91 (GLR), E99, and 124–130 (LSFLSSS).

This sequence belongs to the bacterial CoaD family. Homohexamer. Requires Mg(2+) as cofactor.

Its subcellular location is the cytoplasm. It carries out the reaction (R)-4'-phosphopantetheine + ATP + H(+) = 3'-dephospho-CoA + diphosphate. It participates in cofactor biosynthesis; coenzyme A biosynthesis; CoA from (R)-pantothenate: step 4/5. Functionally, reversibly transfers an adenylyl group from ATP to 4'-phosphopantetheine, yielding dephospho-CoA (dPCoA) and pyrophosphate. The sequence is that of Phosphopantetheine adenylyltransferase from Photorhabdus laumondii subsp. laumondii (strain DSM 15139 / CIP 105565 / TT01) (Photorhabdus luminescens subsp. laumondii).